We begin with the raw amino-acid sequence, 302 residues long: 33 kDa chaperonin (302 aa).

2 disulfide bridges follow: C255–C257 and C288–C291.

This sequence belongs to the HSP33 family. Under oxidizing conditions two disulfide bonds are formed involving the reactive cysteines. Under reducing conditions zinc is bound to the reactive cysteines and the protein is inactive.

It is found in the cytoplasm. Functionally, redox regulated molecular chaperone. Protects both thermally unfolding and oxidatively damaged proteins from irreversible aggregation. Plays an important role in the bacterial defense system toward oxidative stress. The polypeptide is 33 kDa chaperonin (Caulobacter vibrioides (strain ATCC 19089 / CIP 103742 / CB 15) (Caulobacter crescentus)).